The following is a 202-amino-acid chain: Nigerythrin (202 aa).

The region spanning 23 to 168 (KTAVGSTLEN…AYNDIDAPDD (146 aa)) is the Ferritin-like diiron domain. Fe cation-binding residues include E40, E73, E115, E118, E149, H152, C174, C177, C189, and C192. In terms of domain architecture, Rubredoxin-like spans 169–202 (DKFHLCPICGYIHKGEDFEKCPICFRPKDTFTAY).

As to quaternary structure, homodimer. May possess two rubredoxin-like centers and two hemerythrin-like binuclear-iron centers per dimer.

The protein localises to the cytoplasm. Exhibits NADH peroxidase activity (in vitro). This Nitratidesulfovibrio vulgaris (strain ATCC 29579 / DSM 644 / CCUG 34227 / NCIMB 8303 / VKM B-1760 / Hildenborough) (Desulfovibrio vulgaris) protein is Nigerythrin (ngr).